The primary structure comprises 73 residues: Metallothionein-like protein type 2 (73 aa).

This sequence belongs to the metallothionein superfamily. Type 15 family.

Its function is as follows. Metallothioneins have a high content of cysteine residues that bind various heavy metals. The protein is Metallothionein-like protein type 2 of Solanum lycopersicum (Tomato).